Consider the following 132-residue polypeptide: MQKLVLTLLVTSLLAGCSIFGVYKVDIPQGTPLTKAQASQVQVGMNFQQVRFLLGSPTVTDPLNPLRWDYIYNYIPGTYAKKAKIPAAHGQHLKIYFDGTGTVTKIEGLETIPESQPGLPASKEAILTAPPL.

A signal peptide spans 1 to 16 (MQKLVLTLLVTSLLAG). Cysteine 17 carries N-palmitoyl cysteine lipidation. Cysteine 17 is lipidated: S-diacylglycerol cysteine.

Belongs to the BamE family. Part of the Bam complex.

It localises to the cell outer membrane. Its function is as follows. Part of the outer membrane protein assembly complex, which is involved in assembly and insertion of beta-barrel proteins into the outer membrane. The chain is Outer membrane protein assembly factor BamE from Acinetobacter pittii (strain PHEA-2).